The chain runs to 111 residues: Nucleoid-associated protein Teth514_0034 (111 aa).

This sequence belongs to the YbaB/EbfC family. In terms of assembly, homodimer.

Its subcellular location is the cytoplasm. The protein resides in the nucleoid. Functionally, binds to DNA and alters its conformation. May be involved in regulation of gene expression, nucleoid organization and DNA protection. The protein is Nucleoid-associated protein Teth514_0034 of Thermoanaerobacter sp. (strain X514).